A 376-amino-acid chain; its full sequence is Chaperone protein DnaJ (376 aa).

The 66-residue stretch at 5–70 (DYYEILGVSK…QKRAAYDQYG (66 aa)) folds into the J domain. The segment at 131-209 (GVTKEIRIPT…CHGHGRVERS (79 aa)) adopts a CR-type zinc-finger fold. Positions 144, 147, 161, 164, 183, 186, 197, and 200 each coordinate Zn(2+). CXXCXGXG motif repeat units follow at residues 144–151 (CDVCHGSG), 161–168 (CPTCHGSG), 183–190 (CPHCQGRG), and 197–204 (CNKCHGHG).

Belongs to the DnaJ family. In terms of assembly, homodimer. Zn(2+) serves as cofactor.

Its subcellular location is the cytoplasm. Participates actively in the response to hyperosmotic and heat shock by preventing the aggregation of stress-denatured proteins and by disaggregating proteins, also in an autonomous, DnaK-independent fashion. Unfolded proteins bind initially to DnaJ; upon interaction with the DnaJ-bound protein, DnaK hydrolyzes its bound ATP, resulting in the formation of a stable complex. GrpE releases ADP from DnaK; ATP binding to DnaK triggers the release of the substrate protein, thus completing the reaction cycle. Several rounds of ATP-dependent interactions between DnaJ, DnaK and GrpE are required for fully efficient folding. Also involved, together with DnaK and GrpE, in the DNA replication of plasmids through activation of initiation proteins. In Escherichia coli O157:H7 (strain EC4115 / EHEC), this protein is Chaperone protein DnaJ.